Reading from the N-terminus, the 352-residue chain is Neuronal growth regulator 1 (352 aa).

The first 35 residues, 1–35 (MVPLVRGAGGSHQWLAAVLLGLCCLLPAGRLAAPG), serve as a signal peptide directing secretion. Ig-like C2-type domains lie at 36–132 (GDFP…VHLT), 137–219 (PKIF…KVTV), and 223–311 (PTIQ…LPLN). A disulfide bridge links Cys-58 with Cys-116. Asn-71 and Asn-153 each carry an N-linked (GlcNAc...) asparagine glycan. 2 disulfide bridges follow: Cys-158–Cys-201 and Cys-243–Cys-295. N-linked (GlcNAc...) asparagine glycosylation is found at Asn-273, Asn-284, Asn-292, and Asn-305. Gly-322 carries GPI-anchor amidated glycine lipidation. Positions 323-352 (DAEVLFSCWYLVLTLSSLTSIFYLKNIILH) are cleaved as a propeptide — removed in mature form.

It belongs to the immunoglobulin superfamily. IgLON family. Interacts with CEPU-1 and LAMP. Post-translationally, glycosylated. Expressed in embryonic retina, telencephalon, tectum, cerebellum and diencephalon (at protein level).

It localises to the cell membrane. Functionally, may be involved in cell-adhesion. May participate in the regulation of neurite outgrowth in the developing brain. The polypeptide is Neuronal growth regulator 1 (NEGR1) (Gallus gallus (Chicken)).